Reading from the N-terminus, the 517-residue chain is 2-isopropylmalate synthase (517 aa).

The Pyruvate carboxyltransferase domain occupies 4 to 266 (INFFDTTLRD…ESTIQLNEIK (263 aa)). The Mn(2+) site is built by Asp-13, His-201, His-203, and Asn-237. The tract at residues 391–517 (EFESLQVHYG…IEIEKHHAIS (127 aa)) is regulatory domain.

This sequence belongs to the alpha-IPM synthase/homocitrate synthase family. LeuA type 1 subfamily. Homodimer. Mn(2+) is required as a cofactor.

It is found in the cytoplasm. The enzyme catalyses 3-methyl-2-oxobutanoate + acetyl-CoA + H2O = (2S)-2-isopropylmalate + CoA + H(+). It participates in amino-acid biosynthesis; L-leucine biosynthesis; L-leucine from 3-methyl-2-oxobutanoate: step 1/4. In terms of biological role, catalyzes the condensation of the acetyl group of acetyl-CoA with 3-methyl-2-oxobutanoate (2-ketoisovalerate) to form 3-carboxy-3-hydroxy-4-methylpentanoate (2-isopropylmalate). This Bacillus pumilus (strain SAFR-032) protein is 2-isopropylmalate synthase.